Consider the following 239-residue polypeptide: Sugar fermentation stimulation protein homolog (239 aa).

Belongs to the SfsA family.

This is Sugar fermentation stimulation protein homolog from Caulobacter vibrioides (strain ATCC 19089 / CIP 103742 / CB 15) (Caulobacter crescentus).